Here is a 397-residue protein sequence, read N- to C-terminus: Acetate kinase (397 aa).

Asn-8 is a binding site for Mg(2+). Residue Lys-15 coordinates ATP. Residue Arg-89 coordinates substrate. Asp-146 functions as the Proton donor/acceptor in the catalytic mechanism. Residues 206–210, 281–283, and 329–333 each bind ATP; these read HLGNG, DLR, and GVGEN. Glu-382 lines the Mg(2+) pocket.

This sequence belongs to the acetokinase family. Homodimer. The cofactor is Mg(2+). Mn(2+) is required as a cofactor.

It is found in the cytoplasm. The catalysed reaction is acetate + ATP = acetyl phosphate + ADP. Its pathway is metabolic intermediate biosynthesis; acetyl-CoA biosynthesis; acetyl-CoA from acetate: step 1/2. Catalyzes the formation of acetyl phosphate from acetate and ATP. Can also catalyze the reverse reaction. The protein is Acetate kinase of Bacillus anthracis.